The following is a 348-amino-acid chain: Phospho-2-dehydro-3-deoxyheptonate aldolase, Trp-sensitive (348 aa).

Belongs to the class-I DAHP synthase family.

It carries out the reaction D-erythrose 4-phosphate + phosphoenolpyruvate + H2O = 7-phospho-2-dehydro-3-deoxy-D-arabino-heptonate + phosphate. The protein operates within metabolic intermediate biosynthesis; chorismate biosynthesis; chorismate from D-erythrose 4-phosphate and phosphoenolpyruvate: step 1/7. Functionally, stereospecific condensation of phosphoenolpyruvate (PEP) and D-erythrose-4-phosphate (E4P) giving rise to 3-deoxy-D-arabino-heptulosonate-7-phosphate (DAHP). This is Phospho-2-dehydro-3-deoxyheptonate aldolase, Trp-sensitive (aroH) from Salmonella typhi.